We begin with the raw amino-acid sequence, 350 residues long: Beta-ketodecanoyl-[acyl-carrier-protein] synthase (350 aa).

The active site involves C133.

Belongs to the thiolase-like superfamily. Beta-ketoacyl-ACP synthases family.

The catalysed reaction is octanoyl-CoA + malonyl-[ACP] + H(+) = 3-oxodecanoyl-[ACP] + CO2 + CoA. Its pathway is lipid metabolism; fatty acid biosynthesis. In terms of biological role, catalyzes the condensation of octanoyl-CoA, obtained from exogenously supplied fatty acids via beta-oxidation, with malonyl-[acyl-carrier protein], forming 3-oxodecanoyl-[acyl-carrier protein], an intermediate of the fatty acid elongation cycle that can then be extended to supply all of the cellular fatty acid needs. The enzyme thereby shunts fatty acid degradation intermediates from the beta-oxidation pathway into de novo fatty acid biosynthesis. The sequence is that of Beta-ketodecanoyl-[acyl-carrier-protein] synthase from Pseudomonas aeruginosa (strain ATCC 15692 / DSM 22644 / CIP 104116 / JCM 14847 / LMG 12228 / 1C / PRS 101 / PAO1).